The following is a 201-amino-acid chain: FMN-dependent NADH:quinone oxidoreductase (201 aa).

Residues Ser-10, 16–18 (SQS), 96–99 (MYNF), and 140–143 (SRGG) contribute to the FMN site.

The protein belongs to the azoreductase type 1 family. Homodimer. FMN serves as cofactor.

The catalysed reaction is 2 a quinone + NADH + H(+) = 2 a 1,4-benzosemiquinone + NAD(+). It catalyses the reaction N,N-dimethyl-1,4-phenylenediamine + anthranilate + 2 NAD(+) = 2-(4-dimethylaminophenyl)diazenylbenzoate + 2 NADH + 2 H(+). In terms of biological role, quinone reductase that provides resistance to thiol-specific stress caused by electrophilic quinones. Also exhibits azoreductase activity. Catalyzes the reductive cleavage of the azo bond in aromatic azo compounds to the corresponding amines. This chain is FMN-dependent NADH:quinone oxidoreductase, found in Escherichia coli O6:K15:H31 (strain 536 / UPEC).